Here is a 241-residue protein sequence, read N- to C-terminus: Ribose-5-phosphate isomerase A (241 aa).

Substrate contacts are provided by residues 29-32, 84-87, and 97-100; these read TGTT, DGAD, and KGGG. E106 acts as the Proton acceptor in catalysis. Position 124 (K124) interacts with substrate.

The protein belongs to the ribose 5-phosphate isomerase family. Homodimer.

The enzyme catalyses aldehydo-D-ribose 5-phosphate = D-ribulose 5-phosphate. It functions in the pathway carbohydrate degradation; pentose phosphate pathway; D-ribose 5-phosphate from D-ribulose 5-phosphate (non-oxidative stage): step 1/1. In terms of biological role, catalyzes the reversible conversion of ribose-5-phosphate to ribulose 5-phosphate. The sequence is that of Ribose-5-phosphate isomerase A from Thermoplasma acidophilum (strain ATCC 25905 / DSM 1728 / JCM 9062 / NBRC 15155 / AMRC-C165).